A 114-amino-acid polypeptide reads, in one-letter code: Kininogen-2 (114 aa).

The first 23 residues, 1–23 (MRLWFCLSFFIVLCLEHFPGTLA), serve as a signal peptide directing secretion. Positions 35 to 45 (TRLHGHHKPSR) are enriched in basic residues. The segment at 35–114 (TRLHGHHKPS…QIPGLGPLRG (80 aa)) is disordered. Basic and acidic residues predominate over residues 65–80 (PESEEKTEQFLRDLPK). Arginine 113 bears the Arginine amide mark.

The protein belongs to the bradykinin-related peptide family. Expressed by the skin glands.

Its subcellular location is the secreted. Potent vasodilator. Binds B1 (BDKRB1) and B2 (BDKRB2) bradykinin receptors. The sequence is that of Kininogen-2 from Bombina maxima (Giant fire-bellied toad).